Consider the following 197-residue polypeptide: Adenylate kinase (197 aa).

Residue 16–21 (GAGKGT) participates in ATP binding. The segment at 36–65 (STGDILRDHVARGTALGQRVKPILDAGQLV) is NMP. AMP is bound by residues Thr-37, Arg-42, 63 to 65 (QLV), 90 to 93 (GFPR), and Gln-97. The segment at 131–147 (ERGRQAALRGEPVRSDD) is LID. Arg-132 serves as a coordination point for ATP. Residues Arg-144 and Arg-155 each contribute to the AMP site. Gly-183 serves as a coordination point for ATP.

This sequence belongs to the adenylate kinase family. Monomer.

Its subcellular location is the cytoplasm. It catalyses the reaction AMP + ATP = 2 ADP. It participates in purine metabolism; AMP biosynthesis via salvage pathway; AMP from ADP: step 1/1. In terms of biological role, catalyzes the reversible transfer of the terminal phosphate group between ATP and AMP. Plays an important role in cellular energy homeostasis and in adenine nucleotide metabolism. The polypeptide is Adenylate kinase (Deinococcus geothermalis (strain DSM 11300 / CIP 105573 / AG-3a)).